Here is a 106-residue protein sequence, read N- to C-terminus: MLVVTTNDLPGHRVQEVLGEVFGLTVRSRHLGSQIGAGLKSLVGGELRGLTKTLVETRNQAMERLVEQARARGANAVLSFRFDVTEAADVGTEVCAYGTAVVVARE.

Belongs to the UPF0145 family.

This Streptomyces coelicolor (strain ATCC BAA-471 / A3(2) / M145) protein is UPF0145 protein SCO3412.